A 187-amino-acid chain; its full sequence is Putative manganese efflux pump MntP (187 aa).

6 consecutive transmembrane segments (helical) span residues 8-28, 39-59, 65-85, 106-126, 131-151, and 166-186; these read FLSI…GFII, IALF…LTGL, LANF…GKMI, LFAL…GLSV, ILLA…IGVF, and ILGG…GLII.

The protein belongs to the MntP (TC 9.B.29) family.

It is found in the cell inner membrane. Probably functions as a manganese efflux pump. The sequence is that of Putative manganese efflux pump MntP from Rippkaea orientalis (strain PCC 8801 / RF-1) (Cyanothece sp. (strain PCC 8801)).